Here is a 109-residue protein sequence, read N- to C-terminus: Putative glutaredoxin-C11 (109 aa).

Residues 2-108 enclose the Glutaredoxin domain; sequence AEMVARLASE…PLLKSAGALW (107 aa). Cys22 and Cys25 form a disulfide bridge. A Responsive for interaction with TGA factors motif is present at residues 106–109; it reads ALWL.

The protein belongs to the glutaredoxin family. CC-type subfamily.

Its subcellular location is the cytoplasm. It localises to the nucleus. Its function is as follows. Has a glutathione-disulfide oxidoreductase activity in the presence of NADPH and glutathione reductase. Reduces low molecular weight disulfides and proteins. This chain is Putative glutaredoxin-C11 (GRXC11), found in Oryza sativa subsp. japonica (Rice).